The following is a 515-amino-acid chain: Envelope glycoprotein (515 aa).

The N-terminal stretch at M1–T33 is a signal peptide. Residues W34–I436 are Extracellular-facing. N-linked (GlcNAc...) asparagine; by host glycans are attached at residues N129 and N203. Residues C212–C215 carry the CXXC motif. 3 disulfides stabilise this stretch: C212–C215, C212–C392, and C384–C391. 5 N-linked (GlcNAc...) asparagine; by host glycosylation sites follow: N230, N251, N256, N271, and N287. The tract at residues V304 to V324 is fusion peptide. Coiled-coil stretches lie at residues Q330–I376 and N388–W420. A glycan (N-linked (GlcNAc...) asparagine; by host) is linked at N351. An immunosuppression region spans residues A365 to Q381. The short motif at C384–C392 is the CX6CC element. N398 is a glycosylation site (N-linked (GlcNAc...) asparagine; by host). A helical transmembrane segment spans residues H437–I457. The S-palmitoyl cysteine; by host moiety is linked to residue C455. Topologically, residues K458–P515 are cytoplasmic.

In terms of assembly, the mature envelope protein (Env) consists of a trimer of SU-TM heterodimers attached by a labile interchain disulfide bond. Specific enzymatic cleavages in vivo yield mature proteins. Envelope glycoproteins are synthesized as an inactive precursor that is N-glycosylated and processed likely by host cell furin or by a furin-like protease in the Golgi to yield the mature SU and TM proteins. The cleavage site between SU and TM requires the minimal sequence [KR]-X-[KR]-R. Post-translationally, the CXXC motif is highly conserved across a broad range of retroviral envelope proteins. It is thought to participate in the formation of a labile disulfide bond possibly with the CX6CC motif present in the transmembrane protein. Isomerization of the intersubunit disulfide bond to an SU intrachain disulfide bond is thought to occur upon receptor recognition in order to allow membrane fusion. In terms of processing, the transmembrane protein is palmitoylated.

The protein localises to the virion membrane. It localises to the host cell membrane. Its function is as follows. The surface protein (SU) attaches the virus to the host cell by binding to its receptor. This interaction triggers the refolding of the transmembrane protein (TM) and is thought to activate its fusogenic potential by unmasking its fusion peptide. Fusion occurs at the host cell plasma membrane. Functionally, the transmembrane protein (TM) acts as a class I viral fusion protein. Under the current model, the protein has at least 3 conformational states: pre-fusion native state, pre-hairpin intermediate state, and post-fusion hairpin state. During viral and target cell membrane fusion, the coiled coil regions (heptad repeats) assume a trimer-of-hairpins structure, positioning the fusion peptide in close proximity to the C-terminal region of the ectodomain. The formation of this structure appears to drive apposition and subsequent fusion of viral and target cell membranes. Membranes fusion leads to delivery of the nucleocapsid into the cytoplasm. This is Envelope glycoprotein (env) from Bos taurus (Bovine).